Reading from the N-terminus, the 654-residue chain is Tumor necrosis factor alpha-induced protein 2 (654 aa).

Disordered stretches follow at residues 1–38 and 50–78; these read MSEA…KKSK and GKKK…PPPT. The segment covering 28 to 38 has biased composition (basic residues); the sequence is KKKKEKKKKSK.

Belongs to the SEC6 family.

Functionally, may play a role as a mediator of inflammation and angiogenesis. This is Tumor necrosis factor alpha-induced protein 2 (TNFAIP2) from Homo sapiens (Human).